We begin with the raw amino-acid sequence, 448 residues long: Divalent metal cation transporter MntH (448 aa).

A run of 11 helical transmembrane segments spans residues 41–61 (LFAF…PGNW), 69–89 (SEFG…AVLL), 117–137 (GFVL…AEVI), 147–167 (FGIP…LVLF), 176–196 (IEVI…AEMV), 215–235 (IVTN…TVMP), 270–290 (FSLT…AAAF), 307–327 (LLNP…ALLA), 363–383 (VLAI…GINE), 384–404 (LLIF…IPLV), and 424–444 (IVSW…LFYT).

It belongs to the NRAMP family.

Its subcellular location is the cell membrane. Functionally, h(+)-stimulated, divalent metal cation uptake system. The protein is Divalent metal cation transporter MntH of Listeria innocua serovar 6a (strain ATCC BAA-680 / CLIP 11262).